Here is a 428-residue protein sequence, read N- to C-terminus: Glutamyl-tRNA reductase (428 aa).

Substrate is bound by residues 55–58 (TCNR), Ser114, 119–121 (ETQ), and Gln125. Residue Cys56 is the Nucleophile of the active site. 194-199 (GAGEMI) is an NADP(+) binding site.

Belongs to the glutamyl-tRNA reductase family. Homodimer.

It carries out the reaction (S)-4-amino-5-oxopentanoate + tRNA(Glu) + NADP(+) = L-glutamyl-tRNA(Glu) + NADPH + H(+). It participates in porphyrin-containing compound metabolism; protoporphyrin-IX biosynthesis; 5-aminolevulinate from L-glutamyl-tRNA(Glu): step 1/2. Functionally, catalyzes the NADPH-dependent reduction of glutamyl-tRNA(Glu) to glutamate 1-semialdehyde (GSA). The chain is Glutamyl-tRNA reductase from Paraburkholderia xenovorans (strain LB400).